Here is a 188-residue protein sequence, read N- to C-terminus: Thymidine kinase (188 aa).

17–24 (GPMFAGKT) provides a ligand contact to ATP. Glutamate 92 acts as the Proton acceptor in catalysis. Residue phenylalanine 121 participates in substrate binding. Positions 146 and 149 each coordinate Zn(2+). Residue 166–170 (LILAG) participates in substrate binding. Zn(2+) contacts are provided by cysteine 179 and cysteine 182.

The protein belongs to the thymidine kinase family.

It catalyses the reaction thymidine + ATP = dTMP + ADP + H(+). Functionally, phosphorylates thymidine. ASFV replicates in the cytoplasm of infected cells and contains genes encoding a number of enzymes needed for DNA synthesis, including thymidine kinase. Important for growth in swine macrophages in vitro and is a virus virulence factor in swine. This African swine fever virus (isolate Tick/South Africa/Pretoriuskop Pr4/1996) (ASFV) protein is Thymidine kinase.